Here is a 163-residue protein sequence, read N- to C-terminus: uncharacterized protein (163 aa).

The disordered stretch occupies residues 128-163; sequence PKKEKIKKAKRKKKGAKRASKKQKAKSKSARKSRRV. The span at 129–163 shows a compositional bias: basic residues; sequence KKEKIKKAKRKKKGAKRASKKQKAKSKSARKSRRV.

This is an uncharacterized protein from Sulfurisphaera tokodaii (strain DSM 16993 / JCM 10545 / NBRC 100140 / 7) (Sulfolobus tokodaii).